We begin with the raw amino-acid sequence, 233 residues long: Endonuclease V (233 aa).

2 residues coordinate Mg(2+): D48 and D116.

This sequence belongs to the endonuclease V family. Mg(2+) is required as a cofactor.

The protein resides in the cytoplasm. It carries out the reaction Endonucleolytic cleavage at apurinic or apyrimidinic sites to products with a 5'-phosphate.. DNA repair enzyme involved in the repair of deaminated bases. Selectively cleaves double-stranded DNA at the second phosphodiester bond 3' to a deoxyinosine leaving behind the intact lesion on the nicked DNA. This is Endonuclease V from Streptomyces coelicolor (strain ATCC BAA-471 / A3(2) / M145).